The sequence spans 565 residues: MSNGVSVRVLAVQQALETEFSLVEASGNPSSVGSCVARVWLPPKNEATWLLKRYAEDVTYLHHILHLPSVRQQMEDLYKQLSLGLRIEPCHVALILSIFASTAYTLTPLTGGDAVFTNEQTAVKCAFLWSKMALDVLEHSSRSTPGSIEDIQATIILSFVIFNFEGFTMRFRALSASALTMARDLSLHRLDARPDRLPGPHAPLDSDIGREIKRRVWWHMVSTDWILALSGGPQEGTYLMHPAHMRVNYPRNLDDRDLDRYNPQYSRPLSQPTAMTYTLLRIQLADICRSAIDALPPPFSDWGEVNYDRFISLDQRFEAFIRSLPVFFRLDEASRHQSRDVEHQYPQIIVQRYILWSTLQGRRSKLNQPFLTRVSMNPRYQYSRKVCLQSARCVIELKALMDHDMASLASAHVRLATFLHNYFLATAVLVMDLCLNKEGGSSEDRRQEIVDACRVLQEAEATSPMASRFLKSLMDILQKYQIQVLPATTVPDVRPLSANTGASGVPDPNLSDRDLVNPSQILPSTYDPLENANIDDLWQNFINLDQNCSPGSWDHLFSALDSRIV.

The tract at residues 52–259 (KRYAEDVTYL…PRNLDDRDLD (208 aa)) is fungal specific transcription factor domain.

The protein localises to the nucleus. Its function is as follows. Probable transcription factor; part of the gene cluster 23 that mediates the biosynthesis of a family of 2-pyridones known as leporins. This is Probable transcription factor lepB from Aspergillus flavus (strain ATCC 200026 / FGSC A1120 / IAM 13836 / NRRL 3357 / JCM 12722 / SRRC 167).